A 221-amino-acid chain; its full sequence is Protein GrpE (221 aa).

The disordered stretch occupies residues 1–43 (MFTNPFGRKKDMSDDQKKNNQPDTEADNAENIKFAADDTELRA). The segment covering 8–20 (RKKDMSDDQKKNN) has biased composition (basic and acidic residues).

It belongs to the GrpE family. Homodimer.

The protein resides in the cytoplasm. In terms of biological role, participates actively in the response to hyperosmotic and heat shock by preventing the aggregation of stress-denatured proteins, in association with DnaK and GrpE. It is the nucleotide exchange factor for DnaK and may function as a thermosensor. Unfolded proteins bind initially to DnaJ; upon interaction with the DnaJ-bound protein, DnaK hydrolyzes its bound ATP, resulting in the formation of a stable complex. GrpE releases ADP from DnaK; ATP binding to DnaK triggers the release of the substrate protein, thus completing the reaction cycle. Several rounds of ATP-dependent interactions between DnaJ, DnaK and GrpE are required for fully efficient folding. This Deinococcus radiodurans (strain ATCC 13939 / DSM 20539 / JCM 16871 / CCUG 27074 / LMG 4051 / NBRC 15346 / NCIMB 9279 / VKM B-1422 / R1) protein is Protein GrpE.